The following is a 495-amino-acid chain: Glutamate--tRNA ligase (495 aa).

The 'HIGH' region motif lies at 12–22 (PSPTGHLHIGN). Positions 259–263 (KLSKR) match the 'KMSKS' region motif. An ATP-binding site is contributed by Lys262.

Belongs to the class-I aminoacyl-tRNA synthetase family. Glutamate--tRNA ligase type 1 subfamily. As to quaternary structure, monomer.

It is found in the cytoplasm. It carries out the reaction tRNA(Glu) + L-glutamate + ATP = L-glutamyl-tRNA(Glu) + AMP + diphosphate. In terms of biological role, catalyzes the attachment of glutamate to tRNA(Glu) in a two-step reaction: glutamate is first activated by ATP to form Glu-AMP and then transferred to the acceptor end of tRNA(Glu). The chain is Glutamate--tRNA ligase from Latilactobacillus sakei subsp. sakei (strain 23K) (Lactobacillus sakei subsp. sakei).